The sequence spans 360 residues: Phospho-N-acetylmuramoyl-pentapeptide-transferase (360 aa).

10 helical membrane-spanning segments follow: residues 26–46 (TILG…AVIQ), 73–93 (TMGG…WADL), 98–118 (VWVV…DDAL), 136–156 (LQVL…TDPV), 168–188 (WVFP…VGSS), 199–219 (GLAI…AYAS), 235–255 (GVGE…GFLW), 263–283 (VFMG…VAVA), 288–308 (IVLF…MIQV), and 338–358 (VIVR…AMLK).

This sequence belongs to the glycosyltransferase 4 family. MraY subfamily. Mg(2+) is required as a cofactor.

It is found in the cell inner membrane. The catalysed reaction is UDP-N-acetyl-alpha-D-muramoyl-L-alanyl-gamma-D-glutamyl-meso-2,6-diaminopimeloyl-D-alanyl-D-alanine + di-trans,octa-cis-undecaprenyl phosphate = di-trans,octa-cis-undecaprenyl diphospho-N-acetyl-alpha-D-muramoyl-L-alanyl-D-glutamyl-meso-2,6-diaminopimeloyl-D-alanyl-D-alanine + UMP. Its pathway is cell wall biogenesis; peptidoglycan biosynthesis. Catalyzes the initial step of the lipid cycle reactions in the biosynthesis of the cell wall peptidoglycan: transfers peptidoglycan precursor phospho-MurNAc-pentapeptide from UDP-MurNAc-pentapeptide onto the lipid carrier undecaprenyl phosphate, yielding undecaprenyl-pyrophosphoryl-MurNAc-pentapeptide, known as lipid I. The sequence is that of Phospho-N-acetylmuramoyl-pentapeptide-transferase from Halorhodospira halophila (strain DSM 244 / SL1) (Ectothiorhodospira halophila (strain DSM 244 / SL1)).